The chain runs to 250 residues: Methionine aminopeptidase (250 aa).

Histidine 77 lines the substrate pocket. The a divalent metal cation site is built by aspartate 95, aspartate 106, and histidine 169. Histidine 176 is a substrate binding site. A divalent metal cation contacts are provided by glutamate 202 and glutamate 233.

The protein belongs to the peptidase M24A family. Methionine aminopeptidase type 1 subfamily. Monomer. Co(2+) is required as a cofactor. It depends on Zn(2+) as a cofactor. Mn(2+) serves as cofactor. The cofactor is Fe(2+).

It catalyses the reaction Release of N-terminal amino acids, preferentially methionine, from peptides and arylamides.. Functionally, removes the N-terminal methionine from nascent proteins. The N-terminal methionine is often cleaved when the second residue in the primary sequence is small and uncharged (Met-Ala-, Cys, Gly, Pro, Ser, Thr, or Val). Requires deformylation of the N(alpha)-formylated initiator methionine before it can be hydrolyzed. This is Methionine aminopeptidase from Clostridium acetobutylicum (strain ATCC 824 / DSM 792 / JCM 1419 / IAM 19013 / LMG 5710 / NBRC 13948 / NRRL B-527 / VKM B-1787 / 2291 / W).